The following is a 440-amino-acid chain: Trigger factor (440 aa).

The 86-residue stretch at 163 to 248 (GMVLTVDFSF…LKEIKKKELP (86 aa)) folds into the PPIase FKBP-type domain.

This sequence belongs to the FKBP-type PPIase family. Tig subfamily.

It is found in the cytoplasm. The catalysed reaction is [protein]-peptidylproline (omega=180) = [protein]-peptidylproline (omega=0). Functionally, involved in protein export. Acts as a chaperone by maintaining the newly synthesized protein in an open conformation. Functions as a peptidyl-prolyl cis-trans isomerase. This chain is Trigger factor, found in Trichlorobacter lovleyi (strain ATCC BAA-1151 / DSM 17278 / SZ) (Geobacter lovleyi).